Consider the following 1435-residue polypeptide: MARRPSKEWRERFNALSLKCKQLIHSSITNDFTTTDKAQQSTFYSSSGLMDVRKRLSISESLEVFGSLIDNWDLVQLVGTRAEPFVLNNPASYLLVNQLLALAGQAHSAASMVFLNSLMYDDALDHVNLWPYEVERPIPQITREVLSPPPFSVNSYYLQRDIDVIKAKTKAAVYIENYRAGDVFAKKRSISKGATFEERVYHGAVTMLQRMVKLRGSTIQECFVIAISSYRCSDCVRRMMASESGTGAIHEMDHICIMRSNALRWLQAAFSDFPEFPFLMTRDGVKFASNCGAVSTQVPLLFFQTLEMMVLTMDGTLSSTWEGWVCCEWYDRARVGLFSEMFDRRGVVAHLREAILRQSRLLRYQSRGLHLASVSNFPKRSVSADGLDDRIIEGLQKFNSKVCSFIQSWIFQIDLVDEPARWLAVMIKTFASALLYVMGATSLSLEQSAQGTLGIGDPISFPRQEILLEGEWIAVDWYYPDPDLADMREMGMALVDNASPEYTDWEYGFFNVQTTNSAGNVKEVIEERRKQLVAEFGDQGKLLAKVENTRILDAVQKITSTFQNPQDFCDSADNVRKAGERHQVGRRPRVIQMVGTEGQLSAFVLHNVLRPAYKATRFTTSGKNSGDIRDMNIVLEISGELGYKSSLDVKGMDSSTKPFQTNLSLSCVFHRLRGEVLGYPAFFLGSTSSSKDNYVVTRTRYRDEHGGILVEEEYKLTYPQYVLLLGAIHWTSPTRFTDGYFQEFVMTSRTVFRSGLLNTADQHTFLGVIMYALLEKRLRQRWYGKHGKEMREKIGQRREALEEYEEHVKLLGSVLGDDQVAGAFCQGIVDEEVILRITRDLCDETKFLMERLGYECEPEISEYSAEFLKQKGVLGAPELFPERLLLFSSERGDMAGSLPLDRVKIMLSMTDEKIGRARCPLPYASLMLFTSWVSGTASFSIGEEGRLLYRTGRNWKKVFASKRAASVAWKDQFTSDGVFDVRWNGFGMFYKEWASANTKTILLGCGLLWACSDALGVPFPPLVQKDEILCPGTSVYTIPSNAMTHYLLWATRRDRADAERMWRAVRDDLLRGDNDPLESYIEYVDKMFAEVGVIDIPFSALHIYGVGMGFVAGVMPVPMEVWYDFGLFGKVGGFGTWIAELVFKDIRIDREKYDLPRLSMWKNAANHSLPSEVRRASLYARDTLHEKYGMVVPSAVLVAERPGCKIDQALFEVRRVGMEDVRELEKVLDELTRLNHLERKFTKRLAMGLFIVEKLTERRTGYGPAIASNGWGHIAAPYSFQARLLECLAFPMYNGFNYEAVRERVFVDGKLPGDPKLYLKIGRQALSYSEEAYNLVSASMGLSSRQAADMRDMILEGINGLEEARFALNPRKTFLFDVSRRKGAGFFQTPHRRKTNQAYCEMMGMALLLMEPWKFSSGDWRMSFSHRLRAILGRR.

A RdRp catalytic domain is found at 604–880 (VLHNVLRPAY…KGVLGAPELF (277 aa)).

Belongs to the reoviridae RNA-directed RNA polymerase family. As to quaternary structure, interacts with VP4.

It carries out the reaction RNA(n) + a ribonucleoside 5'-triphosphate = RNA(n+1) + diphosphate. Functionally, RNA-directed RNA polymerase involved in transcription and genome replication. Following infection, catalyzes the synthesis of fully conservative plus strands. After core assembly, which consists in recruitment of one capped plus-strand for each genomic segments and polymerase complexes, the polymerase switches mode and catalyzes the synthesis of complementary minus-strands. This is RNA-directed RNA polymerase VP1 from Callospermophilus lateralis (Golden-mantled ground squirrel).